The sequence spans 91 residues: uncharacterized protein (91 aa).

It belongs to the FrmR/RcnR family.

It is found in the cytoplasm. This is an uncharacterized protein from Serratia marcescens.